A 273-amino-acid polypeptide reads, in one-letter code: Ribosomal RNA small subunit methyltransferase A (273 aa).

Positions 18, 20, 45, 66, 91, and 113 each coordinate S-adenosyl-L-methionine.

The protein belongs to the class I-like SAM-binding methyltransferase superfamily. rRNA adenine N(6)-methyltransferase family. RsmA subfamily.

Its subcellular location is the cytoplasm. The enzyme catalyses adenosine(1518)/adenosine(1519) in 16S rRNA + 4 S-adenosyl-L-methionine = N(6)-dimethyladenosine(1518)/N(6)-dimethyladenosine(1519) in 16S rRNA + 4 S-adenosyl-L-homocysteine + 4 H(+). Functionally, specifically dimethylates two adjacent adenosines (A1518 and A1519) in the loop of a conserved hairpin near the 3'-end of 16S rRNA in the 30S particle. May play a critical role in biogenesis of 30S subunits. This chain is Ribosomal RNA small subunit methyltransferase A, found in Shigella boydii serotype 4 (strain Sb227).